The chain runs to 268 residues: Sexual development regulator velC (268 aa).

Residues 1-13 show a composition bias toward basic and acidic residues; it reads MPHGFDKLLHPEP. Disordered stretches follow at residues 1-124 and 142-165; these read MPHG…DNFS and DPDP…NPPH. A compositionally biased stretch (pro residues) spans 14–26; the sequence is EPQSPSPPPPPRR. The Velvet domain occupies 28 to 257; it reads STQSRYHLHI…ELGFVELKTR (230 aa). Basic and acidic residues predominate over residues 92–121; it reads DGNRDREREREHERERERERETDGVARTDD.

Belongs to the velvet family. VelC subfamily. Interacts with velA and vosA.

Its subcellular location is the nucleus. Its function is as follows. Velvet-domain-containing protein that acts as a positive regulator of sexual development. This Penicillium rubens (strain ATCC 28089 / DSM 1075 / NRRL 1951 / Wisconsin 54-1255) (Penicillium chrysogenum) protein is Sexual development regulator velC.